Reading from the N-terminus, the 284-residue chain is Urease accessory protein UreD (284 aa).

The segment at 1 to 28 is disordered; it reads MQSEQQAIGASGCEDAQQPVRQQRARGR.

It belongs to the UreD family. UreD, UreF and UreG form a complex that acts as a GTP-hydrolysis-dependent molecular chaperone, activating the urease apoprotein by helping to assemble the nickel containing metallocenter of UreC. The UreE protein probably delivers the nickel.

It localises to the cytoplasm. Its function is as follows. Required for maturation of urease via the functional incorporation of the urease nickel metallocenter. This Agrobacterium fabrum (strain C58 / ATCC 33970) (Agrobacterium tumefaciens (strain C58)) protein is Urease accessory protein UreD.